The sequence spans 614 residues: Beta-glucosidase 33 (614 aa).

The first 26 residues, Met1–Ala26, serve as a signal peptide directing secretion. A beta-D-glucoside contacts are provided by residues Gln113, His217, and Asn262 to Glu263. The Proton donor role is filled by Glu263. A disulfide bridge connects residues Cys282 and Cys290. The N-linked (GlcNAc...) asparagine glycan is linked to Asn344. Tyr407 provides a ligand contact to a beta-D-glucoside. N-linked (GlcNAc...) asparagine glycosylation is found at Asn419, Asn432, and Asn439. Position 479 (Glu479) interacts with a beta-D-glucoside. The active-site Nucleophile is Glu479. An N-linked (GlcNAc...) asparagine glycan is attached at Asn491. A beta-D-glucoside contacts are provided by residues Trp529, Glu536–Trp537, and Phe545.

This sequence belongs to the glycosyl hydrolase 1 family.

The catalysed reaction is Hydrolysis of terminal, non-reducing beta-D-glucosyl residues with release of beta-D-glucose.. The sequence is that of Beta-glucosidase 33 from Arabidopsis thaliana (Mouse-ear cress).